The primary structure comprises 376 residues: Homeobox protein extradenticle (376 aa).

The interval Ala16–Asn35 is disordered. Over residues Tyr20–Glu34 the composition is skewed to polar residues. The 200-residue stretch at Arg38–Asp237 folds into the PBC domain. The interval Glu45–Gly124 is PBC-A. A PBC-B region spans residues Ala127–Asp237. Residues Ala238–Ile300 constitute a DNA-binding region (homeobox; TALE-type). A compositionally biased stretch (low complexity) spans Ala318 to Met335. The tract at residues Ala318–Pro376 is disordered.

Belongs to the TALE/PBX homeobox family. As to quaternary structure, interacts with Ubx and hth.

Its subcellular location is the nucleus. Functionally, transcription factor which acts with the selector homeodomain proteins altering the regulation of downstream target genes such as wingless (wg), teashirt (tsh) and decapentaplegic (dpp), thus affecting segmental identity. Delimits the eye field and prevent inappropriate eye development. Required for proper localization of chordotonal organs within the peripheral nervous system. This chain is Homeobox protein extradenticle, found in Drosophila pseudoobscura pseudoobscura (Fruit fly).